A 130-amino-acid chain; its full sequence is Fluoride-specific ion channel FluC (130 aa).

The next 4 helical transmembrane spans lie at 2 to 22 (GLLLLLVGIGGGFGAMARFAL), 36 to 56 (GILLCNIIGSLIIGMMAAFLI), 71 to 91 (FLLVTGFLGGFTTFSSFSLDI), and 100 to 120 (IFIAIGYIMVSVLASLIAVIL). Positions 79 and 82 each coordinate Na(+).

This sequence belongs to the fluoride channel Fluc/FEX (TC 1.A.43) family.

The protein resides in the cell inner membrane. It catalyses the reaction fluoride(in) = fluoride(out). Its activity is regulated as follows. Na(+) is not transported, but it plays an essential structural role and its presence is essential for fluoride channel function. Its function is as follows. Fluoride-specific ion channel. Important for reducing fluoride concentration in the cell, thus reducing its toxicity. In Francisella tularensis subsp. mediasiatica (strain FSC147), this protein is Fluoride-specific ion channel FluC.